The chain runs to 422 residues: MGLIAYFDCPTGISGDMCLGALVSAGVPLEYLMEKLAPLGLTDEYRLTAGLVQKQGQAATKVEVKLLNDHHSHGPGHHGMRHLPEIEQLIKQANLPARVSRWSLAIFHQLAIAEGEVHGIEPEAVHFHEVGATDAIVDIVGTCLGLDYLGIDQCYWSALPTGSGTVRAAHGDLPVPVPAVLKLWQTRQVPVYDNGLTGELVTPTGAAIAVTLASQFGPKPPLNLHKVGLGAGSKDFPLANILRLWIGTEITPHNHPLSSEAPFGQLETITVLETQLDDIQPQAVGYLLESLLHQGAIDVFTQAIAMKKSRPGILLTVLCAPENQNHCLNLLFRETTSLGVRVRQQQRYALEREWQTVVIPHGPIRIKVAYGYQAGKKIILNAHPEFADCAALAKATGQPWQLIHQQAIGAWSNLNKELSPES.

This sequence belongs to the LarC family.

The polypeptide is Putative nickel insertion protein (Synechocystis sp. (strain ATCC 27184 / PCC 6803 / Kazusa)).